The following is a 730-amino-acid chain: 1,4-alpha-glucan branching enzyme GlgB (730 aa).

The active-site Nucleophile is the Asp405. The Proton donor role is filled by Glu458.

It belongs to the glycosyl hydrolase 13 family. GlgB subfamily. In terms of assembly, monomer.

It carries out the reaction Transfers a segment of a (1-&gt;4)-alpha-D-glucan chain to a primary hydroxy group in a similar glucan chain.. Its pathway is glycan biosynthesis; glycogen biosynthesis. Its function is as follows. Catalyzes the formation of the alpha-1,6-glucosidic linkages in glycogen by scission of a 1,4-alpha-linked oligosaccharide from growing alpha-1,4-glucan chains and the subsequent attachment of the oligosaccharide to the alpha-1,6 position. The protein is 1,4-alpha-glucan branching enzyme GlgB (glgB) of Haemophilus influenzae (strain ATCC 51907 / DSM 11121 / KW20 / Rd).